The following is a 216-amino-acid chain: uncharacterized protein (216 aa).

Positions 55–216 are disordered; it reads NEDKAEAMSN…NEKEKDVNPK (162 aa). Basic and acidic residues-rich tracts occupy residues 134–152, 177–187, and 207–216; these read LTEKPLTDTEPELHPDNHV, KINDKSDDTLH, and NEKEKDVNPK.

This is an uncharacterized protein from Caenorhabditis elegans.